The primary structure comprises 1122 residues: Receptor-type guanylate cyclase gcy-5 (1122 aa).

The first 19 residues, 1 to 19 (MRLLYFSMVLLWVLGASEC), serve as a signal peptide directing secretion. Topologically, residues 20–486 (QVIPSSRRTL…CPVQFWDQYG (467 aa)) are extracellular. Residues asparagine 252, asparagine 299, asparagine 344, asparagine 350, asparagine 378, asparagine 434, and asparagine 439 are each glycosylated (N-linked (GlcNAc...) asparagine). The helical transmembrane segment at 487–507 (VLIFVASIVLIFLICIMLMCF) threads the bilayer. The Cytoplasmic portion of the chain corresponds to 508-1122 (GFMIRGRRAE…KSKMDTLKVV (615 aa)). Residues 536–562 (QKEKRKPNSRRSLQSGPSTITGESKMT) are disordered. Positions 542-830 (PNSRRSLQSG…NTNLMDHVFN (289 aa)) constitute a Protein kinase domain. The span at 545-559 (RRSLQSGPSTITGES) shows a compositional bias: polar residues. Positions 888-1018 (TVLFSDVVKF…DTVNTASRME (131 aa)) constitute a Guanylate cyclase domain. Residues 1071–1122 (SDTKSLSTRTTPPITDENWPPQMKEDLKKRAVTPYPERQRSGKSKMDTLKVV) are disordered. Residues 1074–1083 (KSLSTRTTPP) are compositionally biased toward polar residues. Basic and acidic residues predominate over residues 1107-1122 (ERQRSGKSKMDTLKVV).

It belongs to the adenylyl cyclase class-4/guanylyl cyclase family. In terms of tissue distribution, expressed in both ASEL and ASER neurons during early embryonic stages and becomes specifically expressed in ASER neuron in early larval stage.

The protein localises to the cell membrane. The enzyme catalyses GTP = 3',5'-cyclic GMP + diphosphate. Guanylate cyclase involved in the production of the second messenger cGMP. Unlike other guanylate cyclases expressed in ASE neurons, may not play a role in chemotaxis responses to salt ions mediated by ASE sensory neurons. The polypeptide is Receptor-type guanylate cyclase gcy-5 (Caenorhabditis elegans).